Reading from the N-terminus, the 45-residue chain is Large ribosomal subunit protein bL34 (45 aa).

Over residues 1-10 (MTQRTLGGTN) the composition is skewed to polar residues. The interval 1-45 (MTQRTLGGTNRKQKRTSGFRARMRTHNGRKVIQARRSKGRHRLAV) is disordered. Over residues 11–45 (RKQKRTSGFRARMRTHNGRKVIQARRSKGRHRLAV) the composition is skewed to basic residues.

This sequence belongs to the bacterial ribosomal protein bL34 family.

The sequence is that of Large ribosomal subunit protein bL34 (rpmH) from Synechocystis sp. (strain ATCC 27184 / PCC 6803 / Kazusa).